The primary structure comprises 500 residues: MQDQYILALDQGTTSSRAMLFDRQGNIVSIAQKEFEQIYPQPGWVEHDPQEIWSTQAGVAAEAVTRTGLNGTSIAAIGITNQRETTIVWDRETGQPVYNAIVWQDRRTADFCDSLKQQGLEAKVRAKTGLPIDSYFSATKIRWILDNVPGARDKARQGKLAFGTVDSWLVWNFTKHELHVTDVTNASRTMLFNIHTREWDSELLELLDIPRSMLPEVKASSEIYGHTKTTVFASKIPLAGIAGDQHAALFGQMCTTSGMVKNTYGTGCFLMMNTGDKPIESRNNLVTTIAWQIGDDVQYALEGSIFIAGAVVQWLRDGMGIIKTAAEIEALAARVPHTDGVYLVPAFAGLGAPHWNARARGSVFGVTRGTTSAHLARAALDAIAYQSLDVLAAMEADSGISIGELRVDGGASANNLLMQFQADLLGVDAVRPQITETTALGAAYLAGLAIGYWKNLDEVRSQWQLDRRFSPSMPKEQVKQCMAGWQRAVRAAKAWADDTQ.

Residue T13 coordinates ADP. ATP is bound by residues T13, T14, and S15. T13 serves as a coordination point for sn-glycerol 3-phosphate. R17 is a binding site for ADP. 4 residues coordinate sn-glycerol 3-phosphate: R83, E84, Y135, and D244. R83, E84, Y135, D244, and Q245 together coordinate glycerol. ADP is bound by residues T266 and G309. Residues T266, G309, Q313, and G410 each contribute to the ATP site. The ADP site is built by G410 and N414.

Belongs to the FGGY kinase family.

The enzyme catalyses glycerol + ATP = sn-glycerol 3-phosphate + ADP + H(+). The protein operates within polyol metabolism; glycerol degradation via glycerol kinase pathway; sn-glycerol 3-phosphate from glycerol: step 1/1. Inhibited by fructose 1,6-bisphosphate (FBP). In terms of biological role, key enzyme in the regulation of glycerol uptake and metabolism. Catalyzes the phosphorylation of glycerol to yield sn-glycerol 3-phosphate. This is Glycerol kinase from Burkholderia vietnamiensis (strain G4 / LMG 22486) (Burkholderia cepacia (strain R1808)).